Here is a 617-residue protein sequence, read N- to C-terminus: Dihydroxy-acid dehydratase (617 aa).

Residue Asp-82 participates in Mg(2+) binding. Cys-123 contributes to the [2Fe-2S] cluster binding site. Mg(2+)-binding residues include Asp-124 and Lys-125. N6-carboxylysine is present on Lys-125. Cys-197 contributes to the [2Fe-2S] cluster binding site. A Mg(2+)-binding site is contributed by Glu-497. Catalysis depends on Ser-523, which acts as the Proton acceptor.

Belongs to the IlvD/Edd family. In terms of assembly, homodimer. [2Fe-2S] cluster is required as a cofactor. Requires Mg(2+) as cofactor.

It catalyses the reaction (2R)-2,3-dihydroxy-3-methylbutanoate = 3-methyl-2-oxobutanoate + H2O. The catalysed reaction is (2R,3R)-2,3-dihydroxy-3-methylpentanoate = (S)-3-methyl-2-oxopentanoate + H2O. It participates in amino-acid biosynthesis; L-isoleucine biosynthesis; L-isoleucine from 2-oxobutanoate: step 3/4. It functions in the pathway amino-acid biosynthesis; L-valine biosynthesis; L-valine from pyruvate: step 3/4. Functionally, functions in the biosynthesis of branched-chain amino acids. Catalyzes the dehydration of (2R,3R)-2,3-dihydroxy-3-methylpentanoate (2,3-dihydroxy-3-methylvalerate) into 2-oxo-3-methylpentanoate (2-oxo-3-methylvalerate) and of (2R)-2,3-dihydroxy-3-methylbutanoate (2,3-dihydroxyisovalerate) into 2-oxo-3-methylbutanoate (2-oxoisovalerate), the penultimate precursor to L-isoleucine and L-valine, respectively. This is Dihydroxy-acid dehydratase from Streptomyces avermitilis (strain ATCC 31267 / DSM 46492 / JCM 5070 / NBRC 14893 / NCIMB 12804 / NRRL 8165 / MA-4680).